The sequence spans 153 residues: Aspartate carbamoyltransferase regulatory chain (153 aa).

Zn(2+) contacts are provided by cysteine 109, cysteine 114, cysteine 138, and cysteine 141.

This sequence belongs to the PyrI family. Contains catalytic and regulatory chains. Requires Zn(2+) as cofactor.

In terms of biological role, involved in allosteric regulation of aspartate carbamoyltransferase. This is Aspartate carbamoyltransferase regulatory chain from Vibrio vulnificus (strain YJ016).